Here is a 162-residue protein sequence, read N- to C-terminus: Cyclic pyranopterin monophosphate synthase (162 aa).

Substrate contacts are provided by residues 75 to 77 and 115 to 116; these read MCH and ME. Residue Asp-130 is part of the active site.

The protein belongs to the MoaC family. In terms of assembly, homohexamer; trimer of dimers.

It catalyses the reaction (8S)-3',8-cyclo-7,8-dihydroguanosine 5'-triphosphate = cyclic pyranopterin phosphate + diphosphate. It functions in the pathway cofactor biosynthesis; molybdopterin biosynthesis. Catalyzes the conversion of (8S)-3',8-cyclo-7,8-dihydroguanosine 5'-triphosphate to cyclic pyranopterin monophosphate (cPMP). In Geobacillus kaustophilus (strain HTA426), this protein is Cyclic pyranopterin monophosphate synthase.